The sequence spans 311 residues: DNA-directed RNA polymerase subunit alpha (311 aa).

The alpha N-terminal domain (alpha-NTD) stretch occupies residues 1-226 (MIEFEKPNIT…EHLDLFTNLT (226 aa)). Positions 243-311 (DDRILDRTIE…IDLGLGLKDK (69 aa)) are alpha C-terminal domain (alpha-CTD).

Belongs to the RNA polymerase alpha chain family. As to quaternary structure, homodimer. The RNAP catalytic core consists of 2 alpha, 1 beta, 1 beta' and 1 omega subunit. When a sigma factor is associated with the core the holoenzyme is formed, which can initiate transcription.

The enzyme catalyses RNA(n) + a ribonucleoside 5'-triphosphate = RNA(n+1) + diphosphate. Its function is as follows. DNA-dependent RNA polymerase catalyzes the transcription of DNA into RNA using the four ribonucleoside triphosphates as substrates. This is DNA-directed RNA polymerase subunit alpha from Streptococcus pneumoniae serotype 4 (strain ATCC BAA-334 / TIGR4).